Consider the following 359-residue polypeptide: Transaldolase (359 aa).

The active-site Schiff-base intermediate with substrate is the lysine 139.

The protein belongs to the transaldolase family. Type 2 subfamily.

Its subcellular location is the cytoplasm. The catalysed reaction is D-sedoheptulose 7-phosphate + D-glyceraldehyde 3-phosphate = D-erythrose 4-phosphate + beta-D-fructose 6-phosphate. It participates in carbohydrate degradation; pentose phosphate pathway; D-glyceraldehyde 3-phosphate and beta-D-fructose 6-phosphate from D-ribose 5-phosphate and D-xylulose 5-phosphate (non-oxidative stage): step 2/3. Functionally, transaldolase is important for the balance of metabolites in the pentose-phosphate pathway. This chain is Transaldolase, found in Thiobacillus denitrificans (strain ATCC 25259 / T1).